Reading from the N-terminus, the 240-residue chain is Serine protease SplB (240 aa).

An N-terminal signal peptide occupies residues 1–36 (MNKNVVIKSLAALTILTSVTGIGITLVEEVQQTAKA). Residues histidine 75, aspartate 113, and serine 193 each act as charge relay system in the active site.

It belongs to the peptidase S1B family.

It is found in the secreted. Its function is as follows. Serine protease that cleaves specifically after the sequence Trp-Glu-Leu-Gln. This is Serine protease SplB (splB) from Staphylococcus aureus (strain MW2).